We begin with the raw amino-acid sequence, 92 residues long: Probable Fe(2+)-trafficking protein (92 aa).

Belongs to the Fe(2+)-trafficking protein family.

Its function is as follows. Could be a mediator in iron transactions between iron acquisition and iron-requiring processes, such as synthesis and/or repair of Fe-S clusters in biosynthetic enzymes. This Shewanella pealeana (strain ATCC 700345 / ANG-SQ1) protein is Probable Fe(2+)-trafficking protein.